The chain runs to 134 residues: Small ribosomal subunit protein uS11 (134 aa).

2 disordered regions span residues 1-24 (MPPK…VAHG) and 115-134 (IQDV…RRRV). A compositionally biased stretch (basic residues) spans 9–18 (AVKKVRRKEK).

The protein belongs to the universal ribosomal protein uS11 family. As to quaternary structure, part of the 30S ribosomal subunit. Interacts with proteins S7 and S18. Binds to IF-3.

In terms of biological role, located on the platform of the 30S subunit, it bridges several disparate RNA helices of the 16S rRNA. Forms part of the Shine-Dalgarno cleft in the 70S ribosome. This is Small ribosomal subunit protein uS11 from Saccharopolyspora erythraea (strain ATCC 11635 / DSM 40517 / JCM 4748 / NBRC 13426 / NCIMB 8594 / NRRL 2338).